The chain runs to 327 residues: Sphingomyelinase D (327 aa).

A signal peptide spans 1-23 (MQPLTRTICALFCLLLTLPLTFG). His-52 is an active-site residue. Mg(2+) contacts are provided by Glu-72, Asp-74, and Asp-117. The SMD-tail motif lies at 320–327 (VTGADKLW).

It belongs to the sphingomyelinase D/phospholipase D family. Mg(2+) is required as a cofactor.

The protein resides in the secreted. The enzyme catalyses a sphingomyelin + H2O = an N-acylsphing-4-enine 1-phosphate + choline + H(+). In terms of biological role, catalyzes the hydrolysis of sphingomyelin. Sphingomyelinases D are produced by some spider in their venoms, but also by arthropods such as ticks, or pathogenic bacteria and fungi. They might play a role in pathogenicity through different mechanisms, such as membrane destabilization and host cell penetration, but also pulmonary inflammation and cutaneous lesions. This is Sphingomyelinase D from Paracoccidioides brasiliensis (strain Pb03).